The sequence spans 310 residues: Apolipoprotein E (310 aa).

The signal sequence occupies residues M1–A18. Tandem repeats lie at residues A77–G98, P99–G120, A121–G142, Q143–L164, R165–E186, R187–T208, L209–R226, and G227–Q248. The tract at residues A77–Q248 is 8 X 22 AA approximate tandem repeats. The segment at H155 to R165 is LDL and other lipoprotein receptors binding. Residue L159 to R162 participates in heparin binding. A lipid-binding and lipoprotein association region spans residues H207 to M283. A222–L229 provides a ligand contact to heparin. Positions N259–Q310 are homooligomerization. Residues R271 to M283 form a specificity for association with VLDL region.

This sequence belongs to the apolipoprotein A1/A4/E family. Homotetramer. May interact with ABCA1; functionally associated with ABCA1 in the biogenesis of HDLs. May interact with APP/A4 amyloid-beta peptide; the interaction is extremely stable in vitro but its physiological significance is unclear. May interact with MAPT. May interact with MAP2. In the cerebrospinal fluid, interacts with secreted SORL1. Interacts with PMEL; this allows the loading of PMEL luminal fragment on ILVs to induce fibril nucleation. Post-translationally, APOE exists as multiple glycosylated and sialylated glycoforms within cells and in plasma. The extent of glycosylation and sialylation are tissue and context specific. In terms of processing, glycated in plasma VLDL. Phosphorylated by FAM20C in the extracellular medium.

It localises to the secreted. It is found in the extracellular space. The protein resides in the extracellular matrix. The protein localises to the extracellular vesicle. Its subcellular location is the endosome. It localises to the multivesicular body. Functionally, APOE is an apolipoprotein, a protein associating with lipid particles, that mainly functions in lipoprotein-mediated lipid transport between organs via the plasma and interstitial fluids. APOE is a core component of plasma lipoproteins and is involved in their production, conversion and clearance. Apolipoproteins are amphipathic molecules that interact both with lipids of the lipoprotein particle core and the aqueous environment of the plasma. As such, APOE associates with chylomicrons, chylomicron remnants, very low density lipoproteins (VLDL) and intermediate density lipoproteins (IDL) but shows a preferential binding to high-density lipoproteins (HDL). It also binds a wide range of cellular receptors including the LDL receptor/LDLR and the very low-density lipoprotein receptor/VLDLR that mediate the cellular uptake of the APOE-containing lipoprotein particles. Finally, APOE also has a heparin-binding activity and binds heparan-sulfate proteoglycans on the surface of cells, a property that supports the capture and the receptor-mediated uptake of APOE-containing lipoproteins by cells. This is Apolipoprotein E (APOE) from Dicerorhinus sumatrensis harrissoni (Bornean rhinoceros).